Reading from the N-terminus, the 53-residue chain is MGFLPECNLTCAFLLHSFTFPIAHCPSFSWASFFFTIRPPFFPKLALVCTIFS.

The chain crosses the membrane as a helical span at residues 13–35 (FLLHSFTFPIAHCPSFSWASFFF).

It is found in the membrane. This is an uncharacterized protein from Saccharomyces cerevisiae (strain ATCC 204508 / S288c) (Baker's yeast).